The sequence spans 201 residues: Elongation factor Ts (201 aa).

The segment at 83–86 (TDFV) is involved in Mg(2+) ion dislocation from EF-Tu.

It belongs to the EF-Ts family.

Its subcellular location is the cytoplasm. Its function is as follows. Associates with the EF-Tu.GDP complex and induces the exchange of GDP to GTP. It remains bound to the aminoacyl-tRNA.EF-Tu.GTP complex up to the GTP hydrolysis stage on the ribosome. This Methylacidiphilum infernorum (isolate V4) (Methylokorus infernorum (strain V4)) protein is Elongation factor Ts.